Consider the following 117-residue polypeptide: Large ribosomal subunit protein bL19 (117 aa).

The protein belongs to the bacterial ribosomal protein bL19 family.

This protein is located at the 30S-50S ribosomal subunit interface and may play a role in the structure and function of the aminoacyl-tRNA binding site. In Leptothrix cholodnii (strain ATCC 51168 / LMG 8142 / SP-6) (Leptothrix discophora (strain SP-6)), this protein is Large ribosomal subunit protein bL19.